A 982-amino-acid polypeptide reads, in one-letter code: Polyribonucleotide nucleotidyltransferase 2, mitochondrial (982 aa).

The N-terminal 39 residues, 1–39, are a transit peptide targeting the mitochondrion; that stretch reads MSMAVASLRLLARGGRRRARFPAPLSVPGGRAAFLSGAA. The KH domain maps to 624–678; the sequence is PRLATLSFSSDSLRKLLFHRKKIEQETGARVSVSDGTVTIVAKTQPIMDKAIEKV. The S1 motif 1 domain occupies 689–757; it reads GRTYKGVVSS…LRGNIKLSLK (69 aa). Disordered regions lie at residues 792-814 and 832-892; these read PSKD…EETP and QDVT…NDVL. Composition is skewed to low complexity over residues 846 to 855 and 868 to 877; these read AKSSPKLSKP and KKTSGASTTA. The S1 motif 2 domain maps to 920–982; the sequence is GDVVTAKVYQ…KGIPVFSLLD (63 aa).

It belongs to the polyribonucleotide nucleotidyltransferase family.

Its subcellular location is the mitochondrion. It catalyses the reaction RNA(n+1) + phosphate = RNA(n) + a ribonucleoside 5'-diphosphate. Functionally, involved in the 3'-end maturation of mitochondrial mRNAs, rRNAs and tRNAs. Functions as a poly(A) mRNA 3'-5' degrading phosphorylase. This Oryza sativa subsp. japonica (Rice) protein is Polyribonucleotide nucleotidyltransferase 2, mitochondrial (PNP2).